Reading from the N-terminus, the 305-residue chain is Heterogeneous nuclear ribonucleoprotein A0 (305 aa).

M1 carries the post-translational modification N-acetylmethionine. Residues 7 to 86 (CKLFIGGLNV…VELKRAVSRE (80 aa)) enclose the RRM 1 domain. S68 is modified (phosphoserine). A Glycyl lysine isopeptide (Lys-Gly) (interchain with G-Cter in SUMO2) cross-link involves residue K80. S84 is subject to Phosphoserine; by MAPKAPK2. Residues K96, K98, K99, and K106 each participate in a glycyl lysine isopeptide (Lys-Gly) (interchain with G-Cter in SUMO2) cross-link. An RRM 2 domain is found at 98–175 (KKLFVGGLKG…HRVEVKKAVP (78 aa)). At K133 the chain carries N6-acetyllysine. R139 carries the post-translational modification Omega-N-methylarginine. Residues K154, K159, K172, and K176 each participate in a glycyl lysine isopeptide (Lys-Gly) (interchain with G-Cter in SUMO2) cross-link. 2 disordered regions span residues 174 to 214 (VPKE…KGGG) and 262 to 305 (QSSY…GSSF). Composition is skewed to gly residues over residues 181-200 (SGGG…GRGR) and 269-281 (KSGG…GSSW). Phosphoserine is present on S188. An Omega-N-methylarginine modification is found at R284. Positions 290–305 (YRGGYGGGGGYGGSSF) are enriched in gly residues. R291 bears the Asymmetric dimethylarginine; alternate mark. Position 291 is a dimethylated arginine; alternate (R291). Residue R291 is modified to Omega-N-methylarginine; alternate.

In terms of processing, phosphorylated at Ser-84 by MAPKAPK2 in response to LPS treatment, promoting stabilization of GADD45A mRNA. Post-translationally, arg-291 is dimethylated, probably to asymmetric dimethylarginine.

It is found in the nucleus. In terms of biological role, mRNA-binding component of ribonucleosomes. Specifically binds AU-rich element (ARE)-containing mRNAs. Involved in post-transcriptional regulation of cytokines mRNAs. The sequence is that of Heterogeneous nuclear ribonucleoprotein A0 (HNRNPA0) from Homo sapiens (Human).